A 252-amino-acid polypeptide reads, in one-letter code: Mitochondrial cardiolipin hydrolase (252 aa).

Over 1–4 the chain is Mitochondrial intermembrane; the sequence is MGRL. A required for mitochondrial localization region spans residues 1–39; sequence MGRLSWQVAAAAAVGLALTLEALPWVLRWLRSRRRRPRR. The helical transmembrane segment at 5-27 threads the bilayer; the sequence is SWQVAAAAAVGLALTLEALPWVL. At 28–252 the chain is on the cytoplasmic side; it reads RWLRSRRRRP…TCGTSSESQT (225 aa). Residues 45–78 form a C3H1-type; atypical zinc finger; sequence PSQVTCTEALLRAPGAELAELPEGCPCGLPHGES. The 28-residue stretch at 151 to 178 folds into the PLD phosphodiesterase domain; the sequence is DPGYMHHKFAIVDKRVLITGSLNWTTQA. Residues His-156, Lys-158, and Asp-163 contribute to the active site.

Belongs to the phospholipase D family. MitoPLD/Zucchini subfamily. As to quaternary structure, homodimer. Interacts with MOV10L1. Interacts with MIGA1 and MIGA2; possibly facilitating homodimer formation. Interacts with GK2. Predominantly expressed in testis and ovary, but not limited to gonads (at protein level). It is also found in brain, heart, pituitary gland, prostate, pancreas, thyroid, bone marrow, lung and muscle.

The protein localises to the mitochondrion outer membrane. Its subcellular location is the golgi apparatus. It carries out the reaction a cardiolipin + H2O = a 1,2-diacyl-sn-glycero-3-phospho-(1'-sn-glycerol) + a 1,2-diacyl-sn-glycero-3-phosphate + H(+). MYC stimulates its phospholipase activity. MIGA1 and MIGA2 increase PLD6 self-association affinity and affects the homodimer conformation facilitating its phospholipase activity over the nuclease activity. Single stranded DNA (ssDNA) hydrolase activity does not depend upon, but is stimulated by the presence of Ca(2+) and Mn(2+). Functionally, presents phospholipase and nuclease activities, depending on the different physiological conditions. Interaction with Mitoguardin (MIGA1 or MIGA2) affects the dimer conformation, facilitating the lipase activity over the nuclease activity. Plays a key role in mitochondrial fusion and fission via its phospholipase activity. In its phospholipase role, it uses the mitochondrial lipid cardiolipin as substrate to generate phosphatidate (PA or 1,2-diacyl-sn-glycero-3-phosphate), a second messenger signaling lipid. Production of PA facilitates Mitofusin-mediated fusion, whereas the cleavage of PA by the Lipin family of phosphatases produces diacylgycerol (DAG) which promotes mitochondrial fission. Both Lipin and DAG regulate mitochondrial dynamics and membrane fusion/fission, important processes for adapting mitochondrial metabolism to changes in cell physiology. Mitochondrial fusion enables cells to cope with the increased nucleotide demand during DNA synthesis. Mitochondrial function and dynamics are closely associated with biological processes such as cell growth, proliferation, and differentiation. Mediator of MYC activity, promotes mitochondrial fusion and activates AMPK which in turn inhibits YAP/TAZ, thereby inducing cell growth and proliferation. The endonuclease activity plays a critical role in PIWI-interacting RNA (piRNA) biogenesis during spermatogenesis. Implicated in spermatogenesis and sperm fertility in testicular germ cells, its single strand-specific nuclease activity is critical for the biogenesis/maturation of PIWI-interacting RNA (piRNA). MOV10L1 selectively binds to piRNA precursors and funnels them to the endonuclease that catalyzes the first cleavage step of piRNA processing to generate piRNA intermediate fragments that are subsequently loaded to Piwi proteins. Cleaves either DNA or RNA substrates with similar affinity, producing a 5' phosphate end, in this way it participates in the processing of primary piRNA transcripts. piRNAs provide essential protection against the activity of mobile genetic elements. piRNA-mediated transposon silencing is thus critical for maintaining genome stability, in particular in germline cells when transposons are mobilized as a consequence of wide-spread genomic demethylation. PA may act as signaling molecule in the recognition/transport of the precursor RNAs of primary piRNAs. Interacts with tesmin in testes, suggesting a role in spermatogenesis via association with its interacting partner. This chain is Mitochondrial cardiolipin hydrolase (PLD6), found in Homo sapiens (Human).